The following is an 82-amino-acid chain: Penaeidin-3a (82 aa).

A signal peptide spans 1-19 (MRLVVCLVFLASFALVCQG). Gln-20 carries the post-translational modification Pyrrolidone carboxylic acid. Intrachain disulfides connect Cys-51-Cys-66, Cys-55-Cys-73, and Cys-67-Cys-74. Ser-81 bears the Serine amide mark.

The N-terminus forms pyrrolidone carboxylic acid. As to expression, higher expression in hemocytes and to a lesser extent in heart, testis, gills, intestine, lymphoid organ and hepatopancreas. Traces in eyes and subcuticular epithelium. Not present in the brain.

The protein localises to the cytoplasmic granule. Its function is as follows. Antibacterial activity against M.luteus and E.coli bacteria. Antifungal activity against N.crassa and F.oxysporum. Presents chitin-binding activity. This is Penaeidin-3a from Penaeus vannamei (Whiteleg shrimp).